Reading from the N-terminus, the 722-residue chain is ORC ubiquitin ligase 1 (722 aa).

Residues 18 to 56 form an RING-type; degenerate zinc finger; the sequence is CHICLGKVRQPVVCTNNHVFCSICIDLWLKNNSQCPACR. 2 coiled-coil regions span residues 87-129 and 157-267; these read LRKT…TILD and VVEW…KEDV. Ser-210 is subject to Phosphoserine. The disordered stretch occupies residues 273-359; sequence RAPSADSKGP…RLGARETPMD (87 aa). A compositionally biased stretch (low complexity) spans 302-319; sequence AGSASASHLASPSSSRLA. Positions 323 to 338 are enriched in polar residues; sequence SVRQESTSRTEPNCPQ. The segment covering 339–359 has biased composition (basic and acidic residues); that stretch reads NKDRYPKPTEPRLGARETPMD. Ser-522, Ser-549, Ser-557, Ser-564, and Ser-566 each carry phosphoserine. Over residues 541–555 the composition is skewed to polar residues; that stretch reads MSESDNSKSPCNNGF. Disordered regions lie at residues 541 to 585 and 691 to 722; these read MSES…GSKL and VPEKRSKNGNQSTKRKIQSSLANASPSKATKS. Positions 571-581 are enriched in basic and acidic residues; sequence EFLEEPDKLQE. Residues 698–722 show a composition bias toward polar residues; it reads NGNQSTKRKIQSSLANASPSKATKS. 2 positions are modified to phosphoserine: Ser-715 and Ser-717.

As to quaternary structure, associates with ORC complex. Binds to chromatin; association is cell cycle-regulated, absent from mitotic chromosomes, is associated with chromatin from G1 and partially released from chromatin from mid S-phase. Auto-ubiquitinated.

The protein resides in the chromosome. The catalysed reaction is S-ubiquitinyl-[E2 ubiquitin-conjugating enzyme]-L-cysteine + [acceptor protein]-L-lysine = [E2 ubiquitin-conjugating enzyme]-L-cysteine + N(6)-ubiquitinyl-[acceptor protein]-L-lysine.. Its function is as follows. E3 ubiquitin ligase essential for DNA replication origin activation during S phase. Acts as a replication origin selector which selects the origins to be fired and catalyzes the multi-mono-ubiquitination of a subset of chromatin-bound ORC3 and ORC5 during S-phase. The protein is ORC ubiquitin ligase 1 of Mus musculus (Mouse).